The chain runs to 88 residues: Small ribosomal subunit protein bS20 (88 aa).

The span at 1-17 shows a compositional bias: basic and acidic residues; the sequence is MANIKSNEKRLRQDIKR. Residues 1–25 form a disordered region; it reads MANIKSNEKRLRQDIKRNLNNKGQK.

This sequence belongs to the bacterial ribosomal protein bS20 family.

Its function is as follows. Binds directly to 16S ribosomal RNA. This Mycoplasma genitalium (strain ATCC 33530 / DSM 19775 / NCTC 10195 / G37) (Mycoplasmoides genitalium) protein is Small ribosomal subunit protein bS20.